The sequence spans 132 residues: MVMTDPIADLLTRVRNANSVRHEVVEVPSSSVKKAIVNILLQEGYLKGVEEYNDGVVPMMRLTLKYGANNERVITGLKRISKPGLRVYCKKDEVPRVLNGLGIALISTSKGLVVDREARKLGLGGEVICYVW.

Belongs to the universal ribosomal protein uS8 family. In terms of assembly, part of the 30S ribosomal subunit. Contacts proteins S5 and S12.

In terms of biological role, one of the primary rRNA binding proteins, it binds directly to 16S rRNA central domain where it helps coordinate assembly of the platform of the 30S subunit. The protein is Small ribosomal subunit protein uS8 of Clostridium perfringens (strain ATCC 13124 / DSM 756 / JCM 1290 / NCIMB 6125 / NCTC 8237 / Type A).